The sequence spans 426 residues: Enolase (426 aa).

A (2R)-2-phosphoglycerate-binding site is contributed by Gln-162. The Proton donor role is filled by Glu-204. Positions 241, 288, and 315 each coordinate Mg(2+). The (2R)-2-phosphoglycerate site is built by Lys-340, Arg-369, Ser-370, and Lys-391. The Proton acceptor role is filled by Lys-340.

It belongs to the enolase family. Mg(2+) serves as cofactor.

Its subcellular location is the cytoplasm. It localises to the secreted. The protein localises to the cell surface. The catalysed reaction is (2R)-2-phosphoglycerate = phosphoenolpyruvate + H2O. The protein operates within carbohydrate degradation; glycolysis; pyruvate from D-glyceraldehyde 3-phosphate: step 4/5. Catalyzes the reversible conversion of 2-phosphoglycerate (2-PG) into phosphoenolpyruvate (PEP). It is essential for the degradation of carbohydrates via glycolysis. This is Enolase from Bacteroides thetaiotaomicron (strain ATCC 29148 / DSM 2079 / JCM 5827 / CCUG 10774 / NCTC 10582 / VPI-5482 / E50).